The primary structure comprises 372 residues: Protein-glutamate methylesterase/protein-glutamine glutaminase (372 aa).

Positions 5–123 (RVLIVDDSAL…SANLTTVSET (119 aa)) constitute a Response regulatory domain. Residue D56 is modified to 4-aspartylphosphate. Over residues 140-151 (GTRSTDTTNSFS) the composition is skewed to polar residues. Positions 140–177 (GTRSTDTTNSFSEPFKSTIPKPMTAAEPQKEEKPTPQR) are disordered. Positions 167 to 177 (PQKEEKPTPQR) are enriched in basic and acidic residues. The 187-residue stretch at 178–364 (EHGNIQIIAI…VSLDNMAAAI (187 aa)) folds into the CheB-type methylesterase domain. Active-site residues include S190, H217, and D313.

The protein belongs to the CheB family. Post-translationally, phosphorylated by CheA. Phosphorylation of the N-terminal regulatory domain activates the methylesterase activity.

It is found in the cytoplasm. It carries out the reaction [protein]-L-glutamate 5-O-methyl ester + H2O = L-glutamyl-[protein] + methanol + H(+). The enzyme catalyses L-glutaminyl-[protein] + H2O = L-glutamyl-[protein] + NH4(+). Involved in chemotaxis. Part of a chemotaxis signal transduction system that modulates chemotaxis in response to various stimuli. Catalyzes the demethylation of specific methylglutamate residues introduced into the chemoreceptors (methyl-accepting chemotaxis proteins or MCP) by CheR. Also mediates the irreversible deamidation of specific glutamine residues to glutamic acid. The sequence is that of Protein-glutamate methylesterase/protein-glutamine glutaminase from Treponema denticola (strain ATCC 35405 / DSM 14222 / CIP 103919 / JCM 8153 / KCTC 15104).